The primary structure comprises 115 residues: Probable 4-amino-4-deoxy-L-arabinose-phosphoundecaprenol flippase subunit ArnE (115 aa).

The next 3 helical transmembrane spans lie at 42–62, 65–85, and 93–112; these read PWPW…LLLL, VEVG…TLAA, and VDRR…ALLG. An EamA domain is found at 46–113; the sequence is LALLALGLGL…IVAGVALLGR (68 aa).

The protein belongs to the ArnE family. Heterodimer of ArnE and ArnF.

Its subcellular location is the cell inner membrane. It participates in bacterial outer membrane biogenesis; lipopolysaccharide biosynthesis. Translocates 4-amino-4-deoxy-L-arabinose-phosphoundecaprenol (alpha-L-Ara4N-phosphoundecaprenol) from the cytoplasmic to the periplasmic side of the inner membrane. This is Probable 4-amino-4-deoxy-L-arabinose-phosphoundecaprenol flippase subunit ArnE from Pseudomonas aeruginosa (strain LESB58).